Reading from the N-terminus, the 504-residue chain is MTWLVLLGTLLCMLRVGLGTPDSEGFPPRALHNCPYKCICAADLLSCTGLGLQDVPAELPAATADLDLSHNALQRLRPGWLAPLFQLRALHLDHNELDALGRGVFVNASGLRLLDLSSNTLRALGRHDLDGLGALEKLLLFNNRLVHLDEHAFHGLRALSHLYLGCNELASFSFDHLHGLSATHLLTLDLSSNRLGHISVPELAALPAFLKNGLYLHNNPLPCDCRLYHLLQRWHQRGLSAVRDFAREYVCLAFKVPASRVRFFQHSRVFENCSSAPALGLERPEEHLYALVGRSLRLYCNTSVPAMRIAWVSPQQELLRAPGSRDGSIAVLADGSLAIGNVQEQHAGLFVCLATGPRLHHNQTHEYNVSVHFPRPEPEAFNTGFTTLLGCAVGLVLVLLYLFAPPCRCCRRACRCRRWPQTPSPLQELSAQSSVLSTTPPDAPSRKASVHKHVVFLEPGRRGLNGRVQLAVAEEFDLYNPGGLQLKAGSESASSIGSEGPMTT.

The first 19 residues, 1-19 (MTWLVLLGTLLCMLRVGLG), serve as a signal peptide directing secretion. At 20-383 (TPDSEGFPPR…PRPEPEAFNT (364 aa)) the chain is on the extracellular side. The LRRNT domain maps to 25–61 (GFPPRALHNCPYKCICAADLLSCTGLGLQDVPAELPA). 2 disulfides stabilise this stretch: Cys-34/Cys-40 and Cys-38/Cys-47. LRR repeat units lie at residues 62-83 (ATAD…WLAP), 86-107 (QLRA…VFVN), 110-133 (GLRL…DGLG), 134-155 (ALEK…AFHG), 158-178 (ALSH…DHLH), and 184-207 (HLLT…AALP). Asn-107 carries an N-linked (GlcNAc...) asparagine glycan. One can recognise an LRRCT domain in the interval 219–275 (NPLPCDCRLYHLLQRWHQRGLSAVRDFAREYVCLAFKVPASRVRFFQHSRVFENCSS). Cystine bridges form between Cys-223–Cys-251, Cys-225–Cys-273, and Cys-300–Cys-352. N-linked (GlcNAc...) asparagine glycosylation is found at Asn-272, Asn-301, Asn-362, and Asn-368. Residues 277-370 (PALGLERPEE…HNQTHEYNVS (94 aa)) enclose the Ig-like C2-type domain. A helical membrane pass occupies residues 384 to 404 (GFTTLLGCAVGLVLVLLYLFA). Topologically, residues 405-504 (PPCRCCRRAC…SIGSEGPMTT (100 aa)) are cytoplasmic. The tract at residues 422–448 (TPSPLQELSAQSSVLSTTPPDAPSRKA) is disordered. A compositionally biased stretch (polar residues) spans 424–440 (SPLQELSAQSSVLSTTP).

The protein belongs to the immunoglobulin superfamily. AMIGO family. As to quaternary structure, binds AMIGO1 or AMIGO2.

Its subcellular location is the membrane. In terms of biological role, may mediate heterophilic cell-cell interaction. May contribute to signal transduction through its intracellular domain. This chain is Amphoterin-induced protein 3, found in Homo sapiens (Human).